We begin with the raw amino-acid sequence, 222 residues long: Uclacyanin-3 (222 aa).

The signal sequence occupies residues 1–21 (MGSTVAAALLLFLAAVPAVFA). One can recognise a Phytocyanin domain in the interval 22-120 (ATFKVGDISG…GMKLAVPVLA (99 aa)). Histidine 61, cysteine 102, histidine 107, and methionine 112 together coordinate Cu cation. Cysteines 74 and 108 form a disulfide. Positions 121-198 (AAPSPSTPSS…APLPPSLSPN (78 aa)) are disordered. 2 stretches are compositionally biased toward pro residues: residues 125–172 (PSTP…PSAS) and 185–195 (TPPPAPLPPSL). Asparagine 198 carries the GPI-anchor amidated asparagine lipid modification. The propeptide at 199 to 222 (AASKGVMSYGIIGVTMILMYAVMT) is removed in mature form.

The protein localises to the cell membrane. Functionally, probably acts as an electron carrier involved in oxygen activation and/or lignin formation. The polypeptide is Uclacyanin-3 (UCC3) (Arabidopsis thaliana (Mouse-ear cress)).